Reading from the N-terminus, the 402-residue chain is Phosphoglycerate kinase (402 aa).

Residues 21 to 23 (DFN), arginine 36, 59 to 62 (HLGR), arginine 119, and arginine 154 each bind substrate. Residues lysine 207, glycine 298, glutamate 329, and 356–359 (GGDA) each bind ATP.

The protein belongs to the phosphoglycerate kinase family. Monomer.

It localises to the cytoplasm. The enzyme catalyses (2R)-3-phosphoglycerate + ATP = (2R)-3-phospho-glyceroyl phosphate + ADP. It participates in carbohydrate degradation; glycolysis; pyruvate from D-glyceraldehyde 3-phosphate: step 2/5. This chain is Phosphoglycerate kinase (pgk), found in Chlamydia pneumoniae (Chlamydophila pneumoniae).